The primary structure comprises 300 residues: Estradiol 17-beta-dehydrogenase 11 (300 aa).

Positions 1–19 (MKFLLDVLLLLPLLIVCSL) are cleaved as a signal peptide. 40–64 (LITGAGHGIGRLTAYEFAKLKSKLV) contacts NADP(+). S172 contacts substrate. Y185 functions as the Proton acceptor in the catalytic mechanism.

It belongs to the short-chain dehydrogenases/reductases (SDR) family. 17-beta-HSD 3 subfamily.

The protein resides in the endoplasmic reticulum. The protein localises to the lipid droplet. It carries out the reaction 17beta-estradiol + NAD(+) = estrone + NADH + H(+). It catalyses the reaction 17beta-estradiol + NADP(+) = estrone + NADPH + H(+). Its function is as follows. Can convert androstan-3-alpha,17-beta-diol (3-alpha-diol) to androsterone in vitro, suggesting that it may participate in androgen metabolism during steroidogenesis. May act by metabolizing compounds that stimulate steroid synthesis and/or by generating metabolites that inhibit it. Has no activity toward DHEA (dehydroepiandrosterone), or A-dione (4-androste-3,17-dione), and only a slight activity toward testosterone to A-dione. The protein is Estradiol 17-beta-dehydrogenase 11 (HSD17B11) of Pongo abelii (Sumatran orangutan).